Reading from the N-terminus, the 248-residue chain is Trihelix transcription factor ENAP2 (248 aa).

The segment covering 1–13 (METTTPQSKSSVS) has biased composition (polar residues). The interval 1–20 (METTTPQSKSSVSHRPPLGR) is disordered. The segment at residues 24 to 113 (WSEEATATLV…RLDVLIGPVV (90 aa)) is a DNA-binding region (MADF). The Nuclear localization signal signature appears at 69–76 (RKKTDLQC). The tract at residues 123–150 (SAPFKNHLNPTGSNSTGSSLEDDDEDDD) is disordered. Positions 130–141 (LNPTGSNSTGSS) are enriched in polar residues. Residues 190–210 (YERIEGKKQQMMIELEKQRME) adopt a coiled-coil conformation.

In terms of assembly, interacts with the Agrobacterium tumefaciens virulence protein F (VirF) in the nucleus. Binds to EIN2 C-terminal region in the presence of ethylene.

Its subcellular location is the nucleus. It localises to the nucleoplasm. Functionally, probable transcription regulator. Promotes histone acetylation during ethylene signaling in an EIN2-dependent manner, thus regulating positively ethylene-responsive genes. This is Trihelix transcription factor ENAP2 from Arabidopsis thaliana (Mouse-ear cress).